Here is a 332-residue protein sequence, read N- to C-terminus: MIKQDQRAERHIPVLLQPVLAGLMPLVGAKVIDGTFGAGGYTCALLKAGAEVIALDRDPHAISAGQSLVEEFFPRLRLVQMEFSQLDRVVEEKVDAVILDIGVSSMQLDEAERGFSFQKDGPLDMRMAQTGFTAGDVVNHLKARDLARIFKILGEERYAGRIARMIEKRRVVQPFLRTGDLAYAIEALIGRKPGDRIHPATRVFQALRIYVNDEIGELARGLFAAERILKPGGRLGVVSFHSLEDRMVKRFFSFRSGECMRSRYLPEIKTAPATFFPLFKGGITASEEELQQNPRSRSARLRIGVRTEAEALAADMKLFGLAEIASFEGGKK.

S-adenosyl-L-methionine contacts are provided by residues 39–41, Asp-56, Phe-83, Asp-100, and Gln-107; that span reads GGY.

Belongs to the methyltransferase superfamily. RsmH family.

It localises to the cytoplasm. The catalysed reaction is cytidine(1402) in 16S rRNA + S-adenosyl-L-methionine = N(4)-methylcytidine(1402) in 16S rRNA + S-adenosyl-L-homocysteine + H(+). Functionally, specifically methylates the N4 position of cytidine in position 1402 (C1402) of 16S rRNA. In Bartonella grahamii (strain as4aup), this protein is Ribosomal RNA small subunit methyltransferase H.